Consider the following 203-residue polypeptide: Ras-related protein Rab-7a (203 aa).

GTP contacts are provided by residues 15-22 (GDSGVGKT), 34-40 (SNQYKAT), 63-67 (DTAGQ), 125-128 (NKID), and 157-158 (AK). An Effector region motif is present at residues 37–45 (YKATIGADF). S-geranylgeranyl cysteine attachment occurs at residues Cys-202 and Cys-203.

It belongs to the small GTPase superfamily. Rab family.

The protein resides in the late endosome membrane. It is found in the lysosome membrane. The protein localises to the cytoplasmic vesicle. Its subcellular location is the autophagosome membrane. It localises to the lipid droplet. It catalyses the reaction GTP + H2O = GDP + phosphate + H(+). Functionally, small GTPase which cycles between active GTP-bound and inactive GDP-bound states. In its active state, binds to a variety of effector proteins playing a key role in the regulation of endo-lysosomal trafficking. Governs early-to-late endosomal maturation, microtubule minus-end as well as plus-end directed endosomal migration and positioning, and endosome-lysosome transport through different protein-protein interaction cascades. Involved in lipophagy, a cytosolic lipase-independent autophagic pathway. This is Ras-related protein Rab-7a (rab7A) from Dictyostelium discoideum (Social amoeba).